The sequence spans 536 residues: Lysosomal acid glucosylceramidase (536 aa).

Residues 1 to 39 (MEFSSPSREECPKPSGRVSIMAGSLTGLLLLQAVSWASG) form the signal peptide. Intrachain disulfides connect Cys43-Cys55 and Cys57-Cys62. N-linked (GlcNAc...) asparagine glycans are attached at residues Asn58, Asn98, and Asn185. Glu274 serves as the catalytic Proton donor. An N-linked (GlcNAc...) asparagine glycan is attached at Asn309. Glu379 functions as the Nucleophile in the catalytic mechanism. N-linked (GlcNAc...) asparagine glycosylation occurs at Asn501.

It belongs to the glycosyl hydrolase 30 family. Interacts with saposin-C. Interacts with SCARB2. Interacts with TCP1. Interacts with GRN; this interaction prevents aggregation of GBA1-SCARB2 complex via interaction with HSPA1A upon stress.

Its subcellular location is the lysosome membrane. The catalysed reaction is a beta-D-glucosyl-(1&lt;-&gt;1')-N-acylsphing-4-enine + H2O = an N-acylsphing-4-enine + D-glucose. It carries out the reaction a beta-D-galactosyl-(1&lt;-&gt;1')-N-acylsphing-4-enine + H2O = an N-acylsphing-4-enine + D-galactose. It catalyses the reaction cholesteryl 3-beta-D-glucoside + H2O = cholesterol + D-glucose. The enzyme catalyses a beta-D-glucosyl-(1&lt;-&gt;1')-N-acylsphing-4-enine + cholesterol = cholesteryl 3-beta-D-glucoside + an N-acylsphing-4-enine. The catalysed reaction is beta-D-glucosyl-N-(9Z-octadecenoyl)-sphing-4E-enine + cholesterol = N-(9Z-octadecenoyl)-sphing-4-enine + cholesteryl 3-beta-D-glucoside. It carries out the reaction beta-D-glucosyl-N-octanoylsphing-4E-enine + cholesterol = N-octanoylsphing-4-enine + cholesteryl 3-beta-D-glucoside. It catalyses the reaction beta-D-glucosyl-N-dodecanoylsphing-4-enine + cholesterol = N-dodecanoylsphing-4-enine + cholesteryl 3-beta-D-glucoside. The enzyme catalyses beta-D-glucosyl-(1&lt;-&gt;1)-N-octadecanoylsphing-4-enine + cholesterol = N-octadecanoylsphing-4-enine + cholesteryl 3-beta-D-glucoside. The catalysed reaction is beta-D-glucosyl-(1&lt;-&gt;1')-N-(15Z-tetracosenoyl)-sphing-4-enine + cholesterol = N-(15Z-tetracosenoyl)-sphing-4-enine + cholesteryl 3-beta-D-glucoside. It carries out the reaction a beta-D-galactosyl-(1&lt;-&gt;1')-N-acylsphing-4-enine + cholesterol = cholesteryl 3-beta-D-galactoside + an N-acylsphing-4-enine. It catalyses the reaction 1-(beta-D-galactosyl)-N-dodecanoylsphing-4-enine + cholesterol = cholesteryl 3-beta-D-galactoside + N-dodecanoylsphing-4-enine. The enzyme catalyses a beta-D-xylosyl-(1&lt;-&gt;1')-N-acylsphing-4-enine + cholesterol = cholesteryl 3-beta-D-xyloside + an N-acylsphing-4-enine. The catalysed reaction is beta-D-xylosyl-(1&lt;-&gt;1')-N-(9Z-octadecenoyl)-sphing-4-enine + cholesterol = cholesteryl 3-beta-D-xyloside + N-(9Z-octadecenoyl)-sphing-4-enine. It functions in the pathway steroid metabolism; cholesterol metabolism. The protein operates within sphingolipid metabolism. Glucosylceramidase that catalyzes, within the lysosomal compartment, the hydrolysis of glucosylceramides/GlcCers (such as beta-D-glucosyl-(1&lt;-&gt;1')-N-acylsphing-4-enine) into free ceramides (such as N-acylsphing-4-enine) and glucose. Plays a central role in the degradation of complex lipids and the turnover of cellular membranes. Through the production of ceramides, participates in the PKC-activated salvage pathway of ceramide formation. Catalyzes the glucosylation of cholesterol, through a transglucosylation reaction where glucose is transferred from GlcCer to cholesterol. GlcCer containing mono-unsaturated fatty acids (such as beta-D-glucosyl-N-(9Z-octadecenoyl)-sphing-4-enine) are preferred as glucose donors for cholesterol glucosylation when compared with GlcCer containing same chain length of saturated fatty acids (such as beta-D-glucosyl-N-octadecanoyl-sphing-4-enine). Under specific conditions, may alternatively catalyze the reverse reaction, transferring glucose from cholesteryl 3-beta-D-glucoside to ceramide. Can also hydrolyze cholesteryl 3-beta-D-glucoside producing glucose and cholesterol. Catalyzes the hydrolysis of galactosylceramides/GalCers (such as beta-D-galactosyl-(1&lt;-&gt;1')-N-acylsphing-4-enine), as well as the transfer of galactose between GalCers and cholesterol in vitro, but with lower activity than with GlcCers. Contrary to GlcCer and GalCer, xylosylceramide/XylCer (such as beta-D-xyosyl-(1&lt;-&gt;1')-N-acylsphing-4-enine) is not a good substrate for hydrolysis, however it is a good xylose donor for transxylosylation activity to form cholesteryl 3-beta-D-xyloside. In Pan troglodytes (Chimpanzee), this protein is Lysosomal acid glucosylceramidase (GBA1).